Consider the following 677-residue polypeptide: Potassium channel KAT1 (677 aa).

Residues 1–63 (MSISWTRNFF…PFNPRYRAWE (63 aa)) are Cytoplasmic-facing. Residues 64–84 (MWLVLLVIYSAWICPFQFAFI) form a helical membrane-spanning segment. The Extracellular portion of the chain corresponds to 85 to 90 (TYKKDA). The helical transmembrane segment at 91-111 (IFIIDNIVNGFFAIDIILTFF) threads the bilayer. Over 112 to 134 (VAYLDSHSYLLVDSPKKIAIRYL) the chain is Cytoplasmic. Residues 135 to 155 (STWFAFDVCSTAPFQPLSLLF) traverse the membrane as a helical segment. The Extracellular segment spans residues 156 to 165 (NYNGSELGFR). Residues 166–186 (ILSMLRLWRLRRVSSLFARLE) traverse the membrane as a helical; Voltage-sensor segment. Residues 187–200 (KDIRFNYFWIRCTK) are Cytoplasmic-facing. A helical transmembrane segment spans residues 201 to 221 (LISVTLFAIHCAGCFNYLIAD). At 222-248 (RYPNPRKTWIGAVYPNFKEASLWNRYV) the chain is on the extracellular side. Positions 249 to 268 (TALYWSITTLTTTGYGDFHA) form an intramembrane region, pore-forming. Topologically, residues 269-272 (ENPR) are extracellular. The helical transmembrane segment at 273 to 293 (EMLFDIFFMMFNLGLTAYLIG) threads the bilayer. The Cytoplasmic segment spans residues 294-677 (NMTNLVVHWT…DGDHLYFSSN (384 aa)). 377–496 (LFQGVSRNFL…RVIMNNLFMK (120 aa)) contributes to the a nucleoside 3',5'-cyclic phosphate binding site. A compositionally biased stretch (basic and acidic residues) spans 568 to 577 (IERAKVERSS). The interval 568–601 (IERAKVERSSSETAGRSYANDSSKKDPYCSSSNQ) is disordered. A KHA domain is found at 612-677 (RVTIHMMSES…DGDHLYFSSN (66 aa)).

Belongs to the potassium channel family. Plant (TC 1.A.1.4) subfamily. The potassium channel is probably composed of a homo- or heterotetrameric complex of pore-forming subunits. May interact with AKT2 and KAT2. Interacts with SLAC1 and SLAH3. In terms of tissue distribution, expressed in guard cells, and in roots.

It is found in the membrane. Its function is as follows. Highly selective inward-rectifying potassium channel. This voltage-gated channel could mediate long-term potassium influx into guard cells leading to stomatal opening. Assuming opened or closed conformations in response to the voltage difference across the membrane, the channel is activated by hyperpolarization. The channel activity is enhanced upon external acidification. Also permeable to ammonium ions. Blocked by tetraethylammonium and barium ions. This Arabidopsis thaliana (Mouse-ear cress) protein is Potassium channel KAT1 (KAT1).